The following is a 129-amino-acid chain: Prefoldin subunit 6 (129 aa).

A2 bears the N-acetylalanine mark. At K21 the chain carries N6-acetyllysine. At K66 the chain carries N6-acetyllysine; alternate. K66 participates in a covalent cross-link: Glycyl lysine isopeptide (Lys-Gly) (interchain with G-Cter in SUMO1); alternate. A Glycyl lysine isopeptide (Lys-Gly) (interchain with G-Cter in SUMO2); alternate cross-link involves residue K66.

The protein belongs to the prefoldin subunit beta family. As to quaternary structure, heterohexamer of two PFD-alpha type and four PFD-beta type subunits. Component of the PAQosome complex which is responsible for the biogenesis of several protein complexes and which consists of R2TP complex members RUVBL1, RUVBL2, RPAP3 and PIH1D1, URI complex members PFDN2, PFDN6, PDRG1, UXT and URI1 as well as ASDURF, POLR2E and DNAAF10/WDR92.

Functionally, binds specifically to cytosolic chaperonin (c-CPN) and transfers target proteins to it. Binds to nascent polypeptide chain and promotes folding in an environment in which there are many competing pathways for nonnative proteins. The chain is Prefoldin subunit 6 (PFDN6) from Homo sapiens (Human).